Here is a 493-residue protein sequence, read N- to C-terminus: Cytochrome P450 2E1 (493 aa).

298-303 lines the substrate pocket; that stretch reads FAGTET. Position 437 (C437) interacts with heme.

The protein belongs to the cytochrome P450 family. In terms of assembly, interacts with chaperones HSP70 and HSP90; this interaction is required for initial targeting to mitochondria. It depends on heme as a cofactor.

The protein resides in the endoplasmic reticulum membrane. It is found in the microsome membrane. Its subcellular location is the mitochondrion inner membrane. It catalyses the reaction an organic molecule + reduced [NADPH--hemoprotein reductase] + O2 = an alcohol + oxidized [NADPH--hemoprotein reductase] + H2O + H(+). The catalysed reaction is (5Z,8Z,11Z)-eicosatrienoate + reduced [NADPH--hemoprotein reductase] + O2 = 19-hydroxy-(5Z,8Z,11Z)-eicosatrienoate + oxidized [NADPH--hemoprotein reductase] + H2O + H(+). It carries out the reaction (5Z,8Z,11Z,14Z,17Z)-eicosapentaenoate + reduced [NADPH--hemoprotein reductase] + O2 = 19-hydroxy-(5Z,8Z,11Z,14Z,17Z)-eicosapentaenoate + oxidized [NADPH--hemoprotein reductase] + H2O + H(+). The enzyme catalyses (4Z,7Z,10Z,13Z,16Z,19Z)-docosahexaenoate + reduced [NADPH--hemoprotein reductase] + O2 = 21-hydroxy-(4Z,7Z,10Z,13Z,16Z,19Z)-docosahexaenoate + oxidized [NADPH--hemoprotein reductase] + H2O + H(+). It catalyses the reaction dodecanoate + reduced [NADPH--hemoprotein reductase] + O2 = 11-hydroxydodecanoate + oxidized [NADPH--hemoprotein reductase] + H2O + H(+). The catalysed reaction is tetradecanoate + reduced [NADPH--hemoprotein reductase] + O2 = 13-hydroxytetradecanoate + oxidized [NADPH--hemoprotein reductase] + H2O + H(+). It carries out the reaction 4-nitrophenol + NADPH + O2 + H(+) = 4-nitrocatechol + NADP(+) + H2O. It functions in the pathway lipid metabolism; fatty acid metabolism. Its activity is regulated as follows. The omega-1 hydroxylase activity is stimulated by cytochrome b5. Functionally, a cytochrome P450 monooxygenase involved in the metabolism of fatty acids. Mechanistically, uses molecular oxygen inserting one oxygen atom into a substrate, and reducing the second into a water molecule, with two electrons provided by NADPH via cytochrome P450 reductase (NADPH--hemoprotein reductase). Catalyzes the hydroxylation of carbon-hydrogen bonds. Hydroxylates fatty acids specifically at the omega-1 position displaying the highest catalytic activity for saturated fatty acids. May be involved in the oxidative metabolism of xenobiotics. The chain is Cytochrome P450 2E1 from Rattus norvegicus (Rat).